The chain runs to 89 residues: Small ribosomal subunit protein uS15 (89 aa).

Belongs to the universal ribosomal protein uS15 family. Part of the 30S ribosomal subunit. Forms a bridge to the 50S subunit in the 70S ribosome, contacting the 23S rRNA.

Its function is as follows. One of the primary rRNA binding proteins, it binds directly to 16S rRNA where it helps nucleate assembly of the platform of the 30S subunit by binding and bridging several RNA helices of the 16S rRNA. In terms of biological role, forms an intersubunit bridge (bridge B4) with the 23S rRNA of the 50S subunit in the ribosome. The chain is Small ribosomal subunit protein uS15 from Hamiltonella defensa subsp. Acyrthosiphon pisum (strain 5AT).